Reading from the N-terminus, the 514-residue chain is Cobyric acid synthase (514 aa).

In terms of domain architecture, GATase cobBQ-type spans 258–458; sequence ALMVGVVRLP…IHGIFDNDGL (201 aa). The active-site Nucleophile is the Cys339. His450 is a catalytic residue.

Belongs to the CobB/CobQ family. CobQ subfamily.

The protein operates within cofactor biosynthesis; adenosylcobalamin biosynthesis. Its function is as follows. Catalyzes amidations at positions B, D, E, and G on adenosylcobyrinic A,C-diamide. NH(2) groups are provided by glutamine, and one molecule of ATP is hydrogenolyzed for each amidation. The chain is Cobyric acid synthase from Syntrophobacter fumaroxidans (strain DSM 10017 / MPOB).